The chain runs to 292 residues: MAAITASMVAELRAKTDAPMMECKKALTEAEGNLEKAEEILRVKLGNKAGKASSRVTAEGVVAAFVEGTTGALVEVNCETDFVSKNDDFLAFTNEVAKLIAQKNPADVAALSALSIGDETVEAVRTRLIGKIGENMTIRRFQRFEGTQLTSYLHGTRIGVMVAFEGNEVAAKDAAMQAAAMKPVSLSADDVPAELVAKERSVAEQKAAESGKPAEIVAKMVEGSVQKYLKEVSLLNQPFVKNDKQTVEQMLKAANTTVKAFTLYVVGEGIEKKQDDFAAEVAAQVAAAKQQA.

Residues 80–83 form an involved in Mg(2+) ion dislocation from EF-Tu region; that stretch reads TDFV.

It belongs to the EF-Ts family.

The protein resides in the cytoplasm. In terms of biological role, associates with the EF-Tu.GDP complex and induces the exchange of GDP to GTP. It remains bound to the aminoacyl-tRNA.EF-Tu.GTP complex up to the GTP hydrolysis stage on the ribosome. This is Elongation factor Ts from Ralstonia pickettii (strain 12J).